Reading from the N-terminus, the 251-residue chain is MAGHSRWHNIKNKKAKADAIKGRMFTKVIKEITIAARLGGGDPEANPRLRIAIEKAKEVNMPMENVERAIKRGTGELEGVNYEEVQYEGYGPGGVAIVVEATTDNRNRTTAEIRHIFSKYGGNLGSSGCVSFSFEDKGIINVPKDKYSEDEIFEKAIEAGAEDVIMDDPEYYEIRTAPSELYKVRENLEKMGVEIAKAELTKIPTTTVQITDEETATKLMKLLDALEDNDDVQKVYANFDIPESILEKLEG.

Belongs to the TACO1 family.

It localises to the cytoplasm. The polypeptide is Probable transcriptional regulatory protein SYO3AOP1_0685 (Sulfurihydrogenibium sp. (strain YO3AOP1)).